A 770-amino-acid polypeptide reads, in one-letter code: Formate acetyltransferase (770 aa).

The PFL domain maps to 5–635 (NEMQKLAWAG…KTGNTPDGRR (631 aa)). Cys-419 (S-acetylcysteine intermediate) is an active-site residue. Catalysis depends on Cys-420, which acts as the Cysteine radical intermediate. Positions 642 to 770 (PGANPMHGRD…VITRTFTESM (129 aa)) constitute a Glycine radical domain. The residue at position 745 (Gly-745) is a Glycine radical.

Belongs to the glycyl radical enzyme (GRE) family. PFL subfamily. As to quaternary structure, homodimer.

The protein localises to the cytoplasm. It catalyses the reaction formate + acetyl-CoA = pyruvate + CoA. It participates in fermentation; pyruvate fermentation; formate from pyruvate: step 1/1. Its function is as follows. Catalyzes the conversion of pyruvate to formate and acetyl-CoA. This is Formate acetyltransferase (pflB) from Haemophilus influenzae (strain ATCC 51907 / DSM 11121 / KW20 / Rd).